The sequence spans 87 residues: Large ribosomal subunit protein bL27 (87 aa).

A disordered region spans residues 1–25 (MAHKKGASSSRNGRDSNAQRLGVKR). Residues 7-19 (ASSSRNGRDSNAQ) are compositionally biased toward polar residues.

The protein belongs to the bacterial ribosomal protein bL27 family.

The sequence is that of Large ribosomal subunit protein bL27 from Rhodococcus jostii (strain RHA1).